We begin with the raw amino-acid sequence, 204 residues long: Outer-membrane lipoprotein carrier protein (204 aa).

The N-terminal stretch at 1-21 (MKKIAIVGALLTSFVASSVWA) is a signal peptide. Residues 169-204 (QRSSYQLKSQQNGAIDASKFTFTPPQGVTVDDQRNK) are disordered. Residues 171 to 181 (SSYQLKSQQNG) show a composition bias toward polar residues.

The protein belongs to the LolA family. In terms of assembly, monomer.

It is found in the periplasm. Participates in the translocation of lipoproteins from the inner membrane to the outer membrane. Only forms a complex with a lipoprotein if the residue after the N-terminal Cys is not an aspartate (The Asp acts as a targeting signal to indicate that the lipoprotein should stay in the inner membrane). This chain is Outer-membrane lipoprotein carrier protein, found in Enterobacter sp. (strain 638).